We begin with the raw amino-acid sequence, 565 residues long: Arginine--tRNA ligase (565 aa).

The 'HIGH' region signature appears at Ala-128–His-138.

It belongs to the class-I aminoacyl-tRNA synthetase family. Monomer.

The protein resides in the cytoplasm. It carries out the reaction tRNA(Arg) + L-arginine + ATP = L-arginyl-tRNA(Arg) + AMP + diphosphate. This is Arginine--tRNA ligase from Albidiferax ferrireducens (strain ATCC BAA-621 / DSM 15236 / T118) (Rhodoferax ferrireducens).